A 783-amino-acid polypeptide reads, in one-letter code: Polyribonucleotide nucleotidyltransferase 1, mitochondrial (783 aa).

The transit peptide at 1–45 (MAACRLCCLCPCLRPLGCGPLGRPGRNRALSYLQMRALWSSTGSR) directs the protein to the mitochondrion. N6-acetyllysine is present on residues Lys250, Lys264, and Lys285. An N6-succinyllysine modification is found at Lys552. The KH domain occupies 605-664 (PVVETVKVPLSKRAKFVGPGGYHLKKLQAETGVTISQVDEETFSIFAPTPTAMHEARDFI). The region spanning 679 to 750 (GAVYTATITE…ADGRMRLSRK (72 aa)) is the S1 motif domain. Residue Ser754 is modified to Phosphoserine.

Belongs to the polyribonucleotide nucleotidyltransferase family. As to quaternary structure, homotrimer; in free form. Homooligomer. Component of the mitochondrial degradosome (mtEXO) complex which is a heteropentamer containing 2 copies of SUPV3L1 and 3 copies of PNPT1. As part of the mitochondrial degradosome complex, interacts with GRSF1 in an RNA-dependent manner; the interaction enhances the activity of the complex. Interacts with TCL1A; the interaction has no effect on PNPT1 exonuclease activity.

The protein resides in the cytoplasm. The protein localises to the mitochondrion matrix. It is found in the mitochondrion intermembrane space. The catalysed reaction is RNA(n+1) + phosphate = RNA(n) + a ribonucleoside 5'-diphosphate. Functionally, RNA-binding protein implicated in numerous RNA metabolic processes. Catalyzes the phosphorolysis of single-stranded polyribonucleotides processively in the 3'-to-5' direction. Mitochondrial intermembrane factor with RNA-processing exoribonulease activity. Component of the mitochondrial degradosome (mtEXO) complex, that degrades 3' overhang double-stranded RNA with a 3'-to-5' directionality in an ATP-dependent manner. Involved in the degradation of non-coding mitochondrial transcripts (MT-ncRNA) and tRNA-like molecules. Required for correct processing and polyadenylation of mitochondrial mRNAs. Plays a role as a cytoplasmic RNA import factor that mediates the translocation of small RNA components, like the 5S RNA, the RNA subunit of ribonuclease P and the mitochondrial RNA-processing (MRP) RNA, into the mitochondrial matrix. Plays a role in mitochondrial morphogenesis and respiration; regulates the expression of the electron transport chain (ETC) components at the mRNA and protein levels. In the cytoplasm, shows a 3'-to-5' exoribonuclease mediating mRNA degradation activity; degrades c-myc mRNA upon treatment with IFNB1/IFN-beta, resulting in a growth arrest in melanoma cells. Regulates the stability of specific mature miRNAs in melanoma cells; specifically and selectively degrades miR-221, preferentially. Also plays a role in RNA cell surveillance by cleaning up oxidized RNAs. Binds to the RNA subunit of ribonuclease P, MRP RNA and miR-221 microRNA. This is Polyribonucleotide nucleotidyltransferase 1, mitochondrial (Pnpt1) from Mus musculus (Mouse).